We begin with the raw amino-acid sequence, 382 residues long: Apolipoprotein A-IV (382 aa).

Positions 1–20 (MFLKAVVLTLSLVAVTGAQA) are cleaved as a signal peptide. 13 repeat units span residues 33-54 (DYFS…KSEL), 60-81 (ALFQ…KKLV), 82-103 (SFAM…EEIR), 115-136 (PHAD…QRLG), 137-158 (PYAE…NQLT), 159-180 (AHAQ…ASLT), 181-202 (PYAD…GHLT), 203-224 (PYAD…RSLA), 225-246 (PYAQ…FQMK), 247-268 (KNAE…QKLV), 269-286 (PVAE…EELQ), 287-308 (KSLA…RNMG), and 309-330 (PYGE…QKLG). Residues 33–330 (DYFSQLSNNA…QVEELRQKLG (298 aa)) form a 13 X 22 AA approximate tandem repeats region.

It belongs to the apolipoprotein A1/A4/E family. In terms of assembly, homodimer. Post-translationally, phosphorylation sites are present in the extracellular medium.

The protein localises to the secreted. In terms of biological role, may have a role in chylomicrons and VLDL secretion and catabolism. Required for efficient activation of lipoprotein lipase by ApoC-II; potent activator of LCAT. Apoa-IV is a major component of HDL and chylomicrons. The chain is Apolipoprotein A-IV (APOA4) from Mirounga angustirostris (Northern elephant seal).